We begin with the raw amino-acid sequence, 445 residues long: Phosphoglucosamine mutase (445 aa).

Serine 102 functions as the Phosphoserine intermediate in the catalytic mechanism. Residues serine 102, aspartate 240, aspartate 242, and aspartate 244 each contribute to the Mg(2+) site. The residue at position 102 (serine 102) is a Phosphoserine.

The protein belongs to the phosphohexose mutase family. Mg(2+) is required as a cofactor. In terms of processing, activated by phosphorylation.

The catalysed reaction is alpha-D-glucosamine 1-phosphate = D-glucosamine 6-phosphate. Its function is as follows. Catalyzes the conversion of glucosamine-6-phosphate to glucosamine-1-phosphate. The polypeptide is Phosphoglucosamine mutase (Mycobacterium ulcerans (strain Agy99)).